The primary structure comprises 647 residues: MLTWKNNLTPVSEQFDDIYFSPENGLEETKHVFIKGNDLYNRWRNWNIQNAFCILELGFGTGLNFLTTWKEYLEYKDRFRLHFISIEKFPLNREEISKALSIFSELVEIKKEFLSSYQDLIPGMNYFQFLGGKIHFSLFLGDVSSALCEISGKVDAIFLDGFAPSKNPEMWDKSVLENLKYVSKKGTTLSTFTVARMVRDSLSFSGFKLEKRPGFGRKREMLIGSYSDSFLESNPKEKPWCKRAYPELQIKTVAIVGAGIAGTTLAYSLSRRGIQVFLIDPSGIAKETSGIPMAISHPHLTKIPGPISLFTLRAFRYALSFLSSFADQNFFEKTGLFHSVTQEMDSERLQKGIENHKLSEEIVFWKPIASKFQNGDFLENEPGVFFRNGFWTRPESIAKKCAEQPGVEFIKGTASRIEQDGTSWKLLIQESGHEIVANSIIFCNSHSIGKLIASLFEGEEPFPIRKVRGQLISLKETEKSSRISNILCAEHYLTPSILGEHILGSTFDEFDLNPLPQKKDTDRLLEFVQNKYPSLNFDSSCVLIEKVGLRAQTPDRLPILGPVFDPREFRKIYKEIDLPKNRNKKFPNLKTIQGLYVFGGLGSRGILSSFLGSEIMASLILGEPVPVESSVLEHLHPARFLYRKVRK.

The interval 1 to 227 is tRNA (mnm(5)s(2)U34)-methyltransferase; sequence MLTWKNNLTP…KREMLIGSYS (227 aa). Residues 256–647 are FAD-dependent cmnm(5)s(2)U34 oxidoreductase; that stretch reads VGAGIAGTTL…ARFLYRKVRK (392 aa).

This sequence in the N-terminal section; belongs to the methyltransferase superfamily. tRNA (mnm(5)s(2)U34)-methyltransferase family. In the C-terminal section; belongs to the DAO family. Requires FAD as cofactor.

It localises to the cytoplasm. It catalyses the reaction 5-aminomethyl-2-thiouridine(34) in tRNA + S-adenosyl-L-methionine = 5-methylaminomethyl-2-thiouridine(34) in tRNA + S-adenosyl-L-homocysteine + H(+). Catalyzes the last two steps in the biosynthesis of 5-methylaminomethyl-2-thiouridine (mnm(5)s(2)U) at the wobble position (U34) in tRNA. Catalyzes the FAD-dependent demodification of cmnm(5)s(2)U34 to nm(5)s(2)U34, followed by the transfer of a methyl group from S-adenosyl-L-methionine to nm(5)s(2)U34, to form mnm(5)s(2)U34. The chain is tRNA 5-methylaminomethyl-2-thiouridine biosynthesis bifunctional protein MnmC from Leptospira interrogans serogroup Icterohaemorrhagiae serovar Lai (strain 56601).